A 447-amino-acid polypeptide reads, in one-letter code: Zinc finger protein ZIC 1 (447 aa).

A C2H2-type 1; atypical zinc finger spans residues 225-260; the sequence is LICKWIEPEQLANPKKSCNKTFSTMHELVTHVTVEH. Residues 269–296 form a C2H2-type 2; atypical zinc finger; that stretch reads HICFWEECPREGKPFKAKYKLVNHIRVH. 3 C2H2-type zinc fingers span residues 302–326, 332–356, and 362–384; these read FPCP…KRTH, FKCE…MHVH, and YLCK…MKVH. Residues 375–434 are disordered; it reads SSLRKHMKVHESSSQGSQPSPAASSGYESSTPPTIVSPTTDNPTTSSMSPSSSAVHHTAG. Residues 386-427 show a composition bias toward low complexity; sequence SSSQGSQPSPAASSGYESSTPPTIVSPTTDNPTTSSMSPSSS.

Belongs to the GLI C2H2-type zinc-finger protein family. In terms of assembly, interacts (via the C2H2-type domains 3, 4 and 5) with MDFIC (via the C2H2-type domains 3, 4 and 5). Interacts with GLI1; the interaction enhances transcription activation. Interacts with GLI2. Interacts with GLI3; the interaction enhances transcription activation. In terms of tissue distribution, expressed in osteoblasts (at protein level). Expressed in the CNS. A high level expression is seen in the cerebellum, while a low level expression is seen in the olfactory bulb, diencephalon, and brainstem. Expressed in lumbar spine and iliac crest.

The protein localises to the nucleus. It is found in the cytoplasm. Functionally, acts as a transcriptional activator. Involved in neurogenesis. Plays important roles in the early stage of organogenesis of the CNS, as well as during dorsal spinal cord development and maturation of the cerebellum. Involved in the spatial distribution of mossy fiber (MF) neurons within the pontine gray nucleus (PGN). Plays a role in the regulation of MF axon pathway choice. Promotes MF migration towards ipsilaterally-located cerebellar territories. May have a role in shear flow mechanotransduction in osteocytes. Retains nuclear GLI1 and GLI3 in the cytoplasm. Binds to the minimal GLI-consensus sequence 5'-TGGGTGGTC-3'. This Mus musculus (Mouse) protein is Zinc finger protein ZIC 1 (Zic1).